We begin with the raw amino-acid sequence, 97 residues long: YcgL domain-containing protein Psyr_1564 (97 aa).

Positions 3-87 (RICSIYRSPK…AEDDYIEHLP (85 aa)) constitute a YcgL domain.

The chain is YcgL domain-containing protein Psyr_1564 from Pseudomonas syringae pv. syringae (strain B728a).